A 296-amino-acid polypeptide reads, in one-letter code: DNA repair protein complementing XP-A cells homolog (296 aa).

Residues 1–10 (MSAEVSTNES) are compositionally biased toward polar residues. Residues 1–39 (MSAEVSTNESAPPAEKKSKLTNAQKARIERNQAKAQKLR) are disordered. Over residues 26-39 (ARIERNQAKAQKLR) the composition is skewed to basic and acidic residues. The Nuclear localization signal motif lies at 26 to 47 (ARIERNQAKAQKLREAKLVSHP). Zn(2+)-binding residues include Cys126, Cys129, Cys147, and Cys150. The segment at 126 to 150 (CLECGDMFADSYLFNNFGHSVCDKC) is a zinc-finger region.

It belongs to the XPA family. Strongly expressed in the central nervous system and muscles.

Its subcellular location is the nucleus. Its function is as follows. Involved in DNA excision repair. Initiates repair by binding to damaged sites with various affinities, depending on the photoproduct and the transcriptional state of the region. The polypeptide is DNA repair protein complementing XP-A cells homolog (Xpac) (Drosophila melanogaster (Fruit fly)).